We begin with the raw amino-acid sequence, 1411 residues long: Tectonin beta-propeller repeat-containing protein 2 (1411 aa).

WD repeat units lie at residues Ile23–Gln66, Met67–Asn114, Lys115–Gly161, Leu162–Val203, Arg204–Val265, Lys266–Ile309, and Tyr310–Lys343. 4 disordered regions span residues Gln379 to Pro439, Val463 to Thr542, Arg579 to Ser637, and Tyr758 to Ser779. Residues Ser400 to Ser420 are compositionally biased toward low complexity. Composition is skewed to polar residues over residues Gly475 to Cys489, Ser496 to Thr542, Pro608 to Ser621, and Pro763 to Ser779. TECPR repeat units follow at residues Asn945 to Ile976, Gln994 to Ser1027, Asp1179 to Asp1209, Gln1226 to Glu1259, Gln1279 to Pro1310, and Arg1322 to Pro1353. Residues His1388–Ile1411 are disordered.

The protein belongs to the WD repeat KIAA0329 family. In terms of assembly, interacts with the ATG8 family members GABARAP, GABARAPL1, GABARAPL2, MAP1LC3B and MAP1LC3C. Detected in skin fibroblast (at protein level).

Functionally, probably plays a role as positive regulator of autophagy. This Homo sapiens (Human) protein is Tectonin beta-propeller repeat-containing protein 2 (TECPR2).